We begin with the raw amino-acid sequence, 1011 residues long: Poly [ADP-ribose] polymerase 1 (1011 aa).

PARP-type zinc fingers lie at residues 9 to 91 (YRAE…ETGA) and 113 to 203 (FAAE…PATK). Zn(2+) contacts are provided by Cys21, Cys24, His53, Cys56, Cys125, Cys128, His159, and Cys162. Residues 198–235 (QLPATKTEGKRKGEEVDGNVVAKKKSRKEKEKESKQEK) form a disordered region. 2 short sequence motifs (nuclear localization signal) span residues 207–209 (KRK) and 220–225 (KKKSRK). Residues 224-358 (RKEKEKESKQ…CKKQDRIFPP (135 aa)) form the PADR1 zinc-binding domain. Basic and acidic residues predominate over residues 225–235 (KEKEKESKQEK). The zinc ribbon stretch occupies residues 289–331 (GALLPCEECKGQFVFKSDAYYCSGDITAWTKCVAKTQTPNRKD). Positions 294, 297, 310, and 320 each coordinate Zn(2+). The segment at 359–378 (EAATVNSAPPPPASAPLTET) is disordered. Residues 371–522 (ASAPLTETVT…PSKSEKKMKL (152 aa)) form an automodification domain region. The region spanning 382–473 (PQDKPLTNMK…KGFQELLSLH (92 aa)) is the BRCT domain. 17 positions are modified to polyADP-ribosyl glutamic acid: Glu403, Glu404, Glu410, Glu411, Glu432, Glu434, Glu441, Glu442, Glu453, Glu454, Glu468, Glu481, Glu485, Glu488, Glu509, Glu510, and Glu517. Residues 496–519 (SKPANMKSAGKVKEEQGPSKSEKK) are disordered. Positions 506–519 (KVKEEQGPSKSEKK) are enriched in basic and acidic residues. Positions 539–635 (SAHVFEKGGK…KNFTKYPKKF (97 aa)) constitute a WGR domain. Residues 659–776 (KSKLAKPIQD…DIEVAYSLLR (118 aa)) form the PARP alpha-helical domain. A PARP catalytic domain is found at 785 to 1011 (DPIDINYEKL…LKFNYKTSLW (227 aa)). Residues 859-861 (HGS), Gly868, Arg875, and Ser901 contribute to the NAD(+) site. Residue Glu985 is the For poly [ADP-ribose] polymerase activity of the active site.

The protein belongs to the ARTD/PARP family. Homodimer; PARP-type zinc-fingers from separate parp1 molecules form a dimer module that specifically recognizes DNA strand breaks. In terms of processing, poly-ADP-ribosylated on serine, glutamate and aspartate residues by autocatalysis. Auto-ADP-ribosylation on serine takes place following interaction with HPF1. Auto poly-ADP-ribosylation on serine residues promotes its dissociation from chromatin.

It is found in the chromosome. The protein resides in the nucleus. It localises to the nucleolus. The protein localises to the cytoplasm. Its subcellular location is the cytosol. The enzyme catalyses NAD(+) + (ADP-D-ribosyl)n-acceptor = nicotinamide + (ADP-D-ribosyl)n+1-acceptor + H(+).. The catalysed reaction is L-seryl-[protein] + NAD(+) = O-(ADP-D-ribosyl)-L-seryl-[protein] + nicotinamide + H(+). It catalyses the reaction L-aspartyl-[protein] + NAD(+) = 4-O-(ADP-D-ribosyl)-L-aspartyl-[protein] + nicotinamide. It carries out the reaction L-glutamyl-[protein] + NAD(+) = 5-O-(ADP-D-ribosyl)-L-glutamyl-[protein] + nicotinamide. The enzyme catalyses L-tyrosyl-[protein] + NAD(+) = O-(ADP-D-ribosyl)-L-tyrosyl-[protein] + nicotinamide + H(+). The catalysed reaction is L-histidyl-[protein] + NAD(+) = N(tele)-(ADP-D-ribosyl)-L-histidyl-[protein] + nicotinamide + H(+). ADP-ribosyltransferase activity is regulated via an allosteric activation mechanism. In absence of activation signal, parp1 is autoinhibited by the PARP alpha-helical domain (also named HD region), which prevents effective NAD(+)-binding. Activity is highly stimulated by signals, such as DNA strand breaks. Binding to damaged DNA unfolds the PARP alpha-helical domain, relieving autoinhibition. Poly-ADP-ribosyltransferase activity is tightly regulated and parp1 is removed from damaged chromatin following initial poly-ADP-ribosylation of chromatin to avoid prolonged residence (trapping) that has cytotoxic consequences. A number of factors or post-translational modifications (auto-poly-ADP-ribosylation) promote parp1 removal from chromatin. Poly-ADP-ribosyltransferase that mediates poly-ADP-ribosylation of proteins and plays a key role in DNA repair. Mediates glutamate, aspartate, serine, histidine or tyrosine ADP-ribosylation of proteins: the ADP-D-ribosyl group of NAD(+) is transferred to the acceptor carboxyl group of target residues and further ADP-ribosyl groups are transferred to the 2'-position of the terminal adenosine moiety, building up a polymer with an average chain length of 20-30 units. Serine ADP-ribosylation of proteins constitutes the primary form of ADP-ribosylation of proteins in response to DNA damage. Specificity for the different amino acids is conferred by interacting factors, such as hpf1 and nmnat1. Following interaction with hpf1, catalyzes serine ADP-ribosylation of target proteins; hpf1 confers serine specificity by completing the parp1 active site. Also catalyzes tyrosine ADP-ribosylation of target proteins following interaction with hpf1. Following interaction with nmnat1, catalyzes glutamate and aspartate ADP-ribosylation of target proteins; nmnat1 confers glutamate and aspartate specificity. Parp1 initiates the repair of DNA breaks: recognizes and binds DNA breaks within chromatin and recruits hpf1, licensing serine ADP-ribosylation of target proteins, such as histones (H2BS6ADPr and H3S10ADPr), thereby promoting decompaction of chromatin and the recruitment of repair factors leading to the reparation of DNA strand breaks. In addition to base excision repair (BER) pathway, also involved in double-strand breaks (DSBs) repair. Mediates the poly-ADP-ribosylation of a number of proteins. In addition to proteins, also able to ADP-ribosylate DNA: catalyzes ADP-ribosylation of DNA strand break termini containing terminal phosphates and a 2'-OH group in single- and double-stranded DNA, respectively. Parp1-mediated DNA repair in neurons plays a role in sleep: senses DNA damage in neurons and promotes sleep, facilitating efficient DNA repair. In addition to DNA repair, also involved in other processes, such as transcription regulation, programmed cell death, membrane repair, adipogenesis and innate immunity. Acts as a repressor of transcription: binds to nucleosomes and modulates chromatin structure in a manner similar to histone H1, thereby altering RNA polymerase II. Acts both as a positive and negative regulator of transcription elongation, depending on the context. Poly-ADP-ribose chains generated by parp1 also play a role in poly-ADP-ribose-dependent cell death, a process named parthanatos. Also acts as a negative regulator of the cGAS-STING pathway by mediating poly-ADP-ribosylation and inactivation of cgas. Acts as a negative regulator of adipogenesis by catalyzing poly ADP-ribosylation of histone H2B on 'Glu-35' (H2BE35ADPr). In Gallus gallus (Chicken), this protein is Poly [ADP-ribose] polymerase 1 (PARP1).